Reading from the N-terminus, the 589-residue chain is Complement component C8 beta chain (589 aa).

The signal sequence occupies residues 1-31 (MKTGAQVWRALAKSCLLCAALGCLHLPGARG). A propeptide spanning residues 32–53 (EKPDFFETNAVNGSLVRSRPVR) is cleaved from the precursor. An N-linked (GlcNAc...) asparagine glycan is attached at Asn-43. The 54-residue stretch at 63–116 (DCQLSTWSSWTACDPCQKKRYRHTYLLRPSQFYGELCDFSDKEVEDCVTNRACR) folds into the TSP type-1 1 domain. 7 disulfide bridges follow: Cys-64–Cys-99, Cys-75–Cys-109, Cys-78–Cys-115, Cys-121–Cys-132, Cys-126–Cys-145, Cys-139–Cys-154, and Cys-161–Cys-199. 2 C-linked (Man) tryptophan glycosylation sites follow: Trp-69 and Trp-72. Residues 120-155 (RCEGFVCAQTGRCVNRRLLCNGDNDCGDQSDEANCR) enclose the LDL-receptor class A domain. 6 residues coordinate Ca(2+): Leu-137, Asn-140, Asp-142, Asp-144, Asp-150, and Glu-151. The 347-residue stretch at 157–503 (IYKKCSQDME…EFQMEVSSCR (347 aa)) folds into the MACPF domain. An N-linked (GlcNAc...) asparagine glycan is attached at Asn-242. 4 beta stranded membrane passes run 251-258 (SSFKFGFK), 261-268 (GLVEFGVR), 378-385 (AGGGFQIG), and 391-398 (VYLKLGVS). Cys-377 and Cys-402 are disulfide-bonded. A Phosphothreonine modification is found at Thr-417. Disulfide bonds link Cys-502-Cys-549, Cys-504-Cys-520, Cys-507-Cys-522, and Cys-524-Cys-533. In terms of domain architecture, EGF-like spans 504–534 (CAPCRNNGVPILKESRCECICPAGFQGVACE). In terms of domain architecture, TSP type-1 2 spans 544 to 587 (DGKWSCWSDWSPCSGGRKTRQRQCNNPAPQRGGSPCSGPASETL). C-linked (Man) tryptophan glycosylation is found at Trp-550 and Trp-553. Residues Cys-556 and Cys-589 are joined by a disulfide bond. The tract at residues 556–589 (CSGGRKTRQRQCNNPAPQRGGSPCSGPASETLDC) is disordered.

This sequence belongs to the complement C6/C7/C8/C9 family. Heterotrimer of 3 chains: alpha (C8A), beta (C8B) and gamma (C8G); the alpha and gamma chains are disulfide bonded. Component of the membrane attack complex (MAC), composed of complement C5b, C6, C7, C8A, C8B, C8G and multiple copies of the pore-forming subunit C9. Post-translationally, N-glycosylated; contains one or two bound glycans. Not O-glycosylated.

The protein resides in the secreted. It is found in the target cell membrane. Membrane attack complex (MAC) assembly is inhibited by CD59, thereby protecting self-cells from damage during complement activation. CD59 acts by binding to the beta-haipins of C8 (C8A and C8B), forming an intermolecular beta-sheet that prevents incorporation of the multiple copies of C9 required for complete formation of the osmolytic pore. MAC assembly is also inhibited by clusterin (CLU) chaperones that inhibit polymerization of C9. Component of the membrane attack complex (MAC), a multiprotein complex activated by the complement cascade, which inserts into a target cell membrane and forms a pore, leading to target cell membrane rupture and cell lysis. The MAC is initiated by proteolytic cleavage of C5 into complement C5b in response to the classical, alternative, lectin and GZMK complement pathways. The complement pathways consist in a cascade of proteins that leads to phagocytosis and breakdown of pathogens and signaling that strengthens the adaptive immune system. C8B, together with C8A and C8G, inserts into the target membrane, but does not form pores by itself. During MAC assembly, associates with C5b, C6 and C7 to form the C5b8 intermediate complex that inserts into the target membrane and traverses the bilayer increasing membrane rigidity. The polypeptide is Complement component C8 beta chain (C8b) (Rattus norvegicus (Rat)).